The sequence spans 140 residues: Large ribosomal subunit protein bL17 (140 aa).

This sequence belongs to the bacterial ribosomal protein bL17 family. As to quaternary structure, part of the 50S ribosomal subunit. Contacts protein L32.

In Gluconobacter oxydans (strain 621H) (Gluconobacter suboxydans), this protein is Large ribosomal subunit protein bL17.